Here is a 666-residue protein sequence, read N- to C-terminus: ATP-dependent RNA helicase DDX51 (666 aa).

The residue at position 2 (Ala-2) is an N-acetylalanine. Residues 9 to 152 (YPGPDAAAAA…AAPDGPALEE (144 aa)) are disordered. The span at 10–28 (PGPDAAAAAGPEGAEAGAH) shows a compositional bias: low complexity. Residues 33 to 48 (ALLERLQSRARERQQQ) are compositionally biased toward basic and acidic residues. The segment covering 49 to 58 (REPAQTEAAA) has biased composition (low complexity). The span at 65 to 75 (RRRRRPRRRRR) shows a compositional bias: basic residues. Phosphoserine is present on residues Ser-83 and Ser-103. Positions 97-108 (EDAGAESNEEAP) are enriched in acidic residues. The short motif at 221-229 (YFPVQAAVI) is the Q motif element. In terms of domain architecture, Helicase ATP-binding spans 243-452 (GRGGYRPSDL…QLGLHQPRLF (210 aa)). Residue 256–263 (APTGSGKT) participates in ATP binding. Residues 371-374 (DEAD) carry the DEAD box motif. A Helicase C-terminal domain is found at 494 to 640 (VVLHLVLEMG…RHELSSKLLQ (147 aa)).

Belongs to the DEAD box helicase family. DDX51/DBP6 subfamily.

The protein localises to the nucleus. The protein resides in the nucleolus. It catalyses the reaction ATP + H2O = ADP + phosphate + H(+). Functionally, ATP-binding RNA helicase involved in the biogenesis of 60S ribosomal subunits. This chain is ATP-dependent RNA helicase DDX51 (DDX51), found in Homo sapiens (Human).